Consider the following 464-residue polypeptide: Na(+)/H(+) antiporter NhaA 2 (464 aa).

A run of 11 helical transmembrane segments spans residues 53 to 73, 96 to 116, 134 to 154, 165 to 185, 195 to 215, 219 to 239, 257 to 277, 313 to 333, 340 to 360, 378 to 398, and 412 to 432; these read VGGIILLVAAAAALIWANSPW, LTLGAWAADGLLAIFFLVVGL, ALPIAAAVGGMVVPALIFVLV, GWAIPTATDIAFAVAVLAVIS, FLLTLAVVDDLLAITVIAVFY, IKAWALALAVVPLALFTVCAQ, VLVHESGVHATVAGVLLGFAV, IAIPVFAFFAAGVSIGGLSGL, PITLGIVLGLVAGKPIGILVT, WVDVLGMSMLAGIGFTVSLLI, and FVKIGVLSGSLLAASLAAIVL.

The protein belongs to the NhaA Na(+)/H(+) (TC 2.A.33) antiporter family.

It localises to the cell membrane. It catalyses the reaction Na(+)(in) + 2 H(+)(out) = Na(+)(out) + 2 H(+)(in). Na(+)/H(+) antiporter that extrudes sodium in exchange for external protons. This chain is Na(+)/H(+) antiporter NhaA 2, found in Mycolicibacterium vanbaalenii (strain DSM 7251 / JCM 13017 / BCRC 16820 / KCTC 9966 / NRRL B-24157 / PYR-1) (Mycobacterium vanbaalenii).